A 218-amino-acid chain; its full sequence is GILT-like protein ZK669.3 (218 aa).

The N-terminal stretch at 1–21 is a signal peptide; that stretch reads MRRLNGVFICLILFITKISYA. N-linked (GlcNAc...) asparagine glycosylation is found at Asn129 and Asn185.

Belongs to the GILT family.

The protein resides in the secreted. This Caenorhabditis elegans protein is GILT-like protein ZK669.3.